A 482-amino-acid chain; its full sequence is Spore germination protein A1 (482 aa).

Transmembrane regions (helical) follow at residues 242-262 (VAIL…LGIL), 284-304 (FASI…VSFH), 321-341 (ENVP…IELL), 351-371 (PLGQ…AVEA), 373-393 (LVSS…FTVP), and 406-426 (FISM…FMLV).

The protein belongs to the GerABKA family.

Its subcellular location is the cell membrane. Functionally, forms a complex at the inner spore membrane which acts as a receptor for L-alanine, thus is involved in the stimulation of germination in response to alanine. Can stimulate germination in the absence of GerD and GerK gene products (fructose and glucose receptors, respectively), but the response is improved in their presence. The protein is Spore germination protein A1 (gerAA) of Bacillus subtilis (strain 168).